The primary structure comprises 1359 residues: DNA-directed RNA polymerase subunit beta (1359 aa).

The protein belongs to the RNA polymerase beta chain family. In terms of assembly, the RNAP catalytic core consists of 2 alpha, 1 beta, 1 beta' and 1 omega subunit. When a sigma factor is associated with the core the holoenzyme is formed, which can initiate transcription.

It catalyses the reaction RNA(n) + a ribonucleoside 5'-triphosphate = RNA(n+1) + diphosphate. DNA-dependent RNA polymerase catalyzes the transcription of DNA into RNA using the four ribonucleoside triphosphates as substrates. This chain is DNA-directed RNA polymerase subunit beta, found in Nitrosococcus oceani (strain ATCC 19707 / BCRC 17464 / JCM 30415 / NCIMB 11848 / C-107).